A 319-amino-acid chain; its full sequence is Cobalamin biosynthesis protein CobD (319 aa).

Helical transmembrane passes span 55-75 (AVMW…VLAL), 78-98 (EIHP…VLAG), 153-173 (VDGI…LAMA), and 296-316 (LMWV…CLLV).

It belongs to the CobD/CbiB family.

It is found in the cell membrane. The protein operates within cofactor biosynthesis; adenosylcobalamin biosynthesis. Functionally, converts cobyric acid to cobinamide by the addition of aminopropanol on the F carboxylic group. The polypeptide is Cobalamin biosynthesis protein CobD (Citrobacter koseri (strain ATCC BAA-895 / CDC 4225-83 / SGSC4696)).